Consider the following 467-residue polypeptide: 3-isopropylmalate dehydratase large subunit (467 aa).

Residues C349, C409, and C412 each coordinate [4Fe-4S] cluster. The interval P422–R443 is disordered.

Belongs to the aconitase/IPM isomerase family. LeuC type 1 subfamily. As to quaternary structure, heterodimer of LeuC and LeuD. [4Fe-4S] cluster serves as cofactor.

The enzyme catalyses (2R,3S)-3-isopropylmalate = (2S)-2-isopropylmalate. It functions in the pathway amino-acid biosynthesis; L-leucine biosynthesis; L-leucine from 3-methyl-2-oxobutanoate: step 2/4. Functionally, catalyzes the isomerization between 2-isopropylmalate and 3-isopropylmalate, via the formation of 2-isopropylmaleate. This is 3-isopropylmalate dehydratase large subunit from Paramagnetospirillum magneticum (strain ATCC 700264 / AMB-1) (Magnetospirillum magneticum).